Reading from the N-terminus, the 125-residue chain is MRLAGVNLPLNKHAVIALTYVYGIGNTSAKNILAKAGVAPDKKISELSDEEAHAIREIIGNEYTVEGEARAEQQLSIKRLMDIGCYRGLRHRRSLPARGQRTRTNARTRKGKRKTVAGKKKAGKK.

The disordered stretch occupies residues 92–125 (RRSLPARGQRTRTNARTRKGKRKTVAGKKKAGKK).

The protein belongs to the universal ribosomal protein uS13 family. As to quaternary structure, part of the 30S ribosomal subunit. Forms a loose heterodimer with protein S19. Forms two bridges to the 50S subunit in the 70S ribosome.

Located at the top of the head of the 30S subunit, it contacts several helices of the 16S rRNA. In the 70S ribosome it contacts the 23S rRNA (bridge B1a) and protein L5 of the 50S subunit (bridge B1b), connecting the 2 subunits; these bridges are implicated in subunit movement. Contacts the tRNAs in the A and P-sites. This chain is Small ribosomal subunit protein uS13, found in Chlorobaculum parvum (strain DSM 263 / NCIMB 8327) (Chlorobium vibrioforme subsp. thiosulfatophilum).